The sequence spans 202 residues: Urease accessory protein UreG (202 aa).

GTP is bound at residue 13-20 (GPVGAGKT).

The protein belongs to the SIMIBI class G3E GTPase family. UreG subfamily. In terms of assembly, homodimer. UreD, UreF and UreG form a complex that acts as a GTP-hydrolysis-dependent molecular chaperone, activating the urease apoprotein by helping to assemble the nickel containing metallocenter of UreC. The UreE protein probably delivers the nickel.

Its subcellular location is the cytoplasm. Its function is as follows. Facilitates the functional incorporation of the urease nickel metallocenter. This process requires GTP hydrolysis, probably effectuated by UreG. The polypeptide is Urease accessory protein UreG (Dinoroseobacter shibae (strain DSM 16493 / NCIMB 14021 / DFL 12)).